Consider the following 670-residue polypeptide: MHAIQEEIKQLTSVLNEHNYRYYVDDAPSVPDAEYDRLINRLKQLEAENPELCLPDSPTQRVGGVALAKFNQITHLKPMLSLDNVFSEDEFDAFYKRISDKTSETPTFCCEPKLDGLAVSILYRDGVYERAATRGDGSVGEDITENVRTIRSIPLKLRGSDFPPLLEVRGEVIMPKKAFDSLNDRARAKGEKLFVNPRNAAAGSLRQLDSKITASRALGFYAYALGVVEPESWPLGKGHHEQLMQLKSWGFPVSSEVKLCGDVKTVLDYYADILERREALDYEIDGVVIKVDSIEHQLQLGFVAKAPRWATAFKFPAQEEMTLLEGVDFQVGRTGAVTPVARLKPVFVGGVTVSNATLHNADEIARLGVKVGDTVIVRRAGDVIPQVVAIVAEKRPVSANDILFPQTCPVCDSMVERTEGEAVARCTGGLFCEAQRKEAIKHFASRKALNVDGMGDKVVEQLIDKELVASPADLFRLTASAMTMLDRMGMKSATKLVAAIEDAKQTTFARFLYGLGIREVGEATAANLANYFKNLDKLKSADADEFIKVDDVGAIVAQHLTYFFAQPHNLEVVDNLVQAGVHWPEIEEVAEEALSLKGQTWVLTGTLTKLNRNDAKAQLQALGAKVAGSVSKNTDCLVAGEAAGSKLTKAQDLGVKVLDEDGLLAVLAGE.

Residues 32–36 (DAEYD), 81–82 (SL), and glutamate 111 each bind NAD(+). Catalysis depends on lysine 113, which acts as the N6-AMP-lysine intermediate. NAD(+) is bound by residues arginine 134, glutamate 171, lysine 290, and lysine 314. 4 residues coordinate Zn(2+): cysteine 408, cysteine 411, cysteine 426, and cysteine 432. A BRCT domain is found at 591-670 (EEALSLKGQT…DGLLAVLAGE (80 aa)).

It belongs to the NAD-dependent DNA ligase family. LigA subfamily. Requires Mg(2+) as cofactor. The cofactor is Mn(2+).

It catalyses the reaction NAD(+) + (deoxyribonucleotide)n-3'-hydroxyl + 5'-phospho-(deoxyribonucleotide)m = (deoxyribonucleotide)n+m + AMP + beta-nicotinamide D-nucleotide.. Its function is as follows. DNA ligase that catalyzes the formation of phosphodiester linkages between 5'-phosphoryl and 3'-hydroxyl groups in double-stranded DNA using NAD as a coenzyme and as the energy source for the reaction. It is essential for DNA replication and repair of damaged DNA. This Shewanella sediminis (strain HAW-EB3) protein is DNA ligase.